A 1220-amino-acid chain; its full sequence is Formin-F (1220 aa).

The segment covering 1 to 10 (MNRIFGRKKK) has biased composition (basic residues). The segment at 1 to 62 (MNRIFGRKKK…TNSKSADKFD (62 aa)) is disordered. Positions 6–373 (GRKKKDKDSD…QISVNKPMIG (368 aa)) constitute a GBD/FH3 domain. Basic and acidic residues predominate over residues 11–20 (DKDSDEKGST). Residues 41 to 56 (AYSSLQPDGNNSTNSK) show a composition bias toward polar residues. A coiled-coil region spans residues 392–428 (VALQSEFQKNIEELAKVKDQLKKANFDLNIANQELSS). Disordered regions lie at residues 461 to 659 (IDSN…KFTV), 711 to 732 (SQKK…GTVS), and 1049 to 1192 (DEAK…KKDI). Low complexity-rich tracts occupy residues 501 to 518 (SKPP…SSSQ) and 525 to 554 (SNLS…PQQQ). The 124-residue stretch at 532–655 (SDSLSNDFKS…NSNKPPANAP (124 aa)) folds into the FH1 domain. The segment covering 555–564 (NIESTLTPEP) has biased composition (polar residues). A compositionally biased stretch (pro residues) spans 575–638 (TTPPPAPPAP…GKGGPPPPPG (64 aa)). Residues 656–1054 (KFTVSKPTTK…AIKRDEAKAK (399 aa)) form the FH2 domain. A compositionally biased stretch (basic and acidic residues) spans 711–722 (SQKKLEASDKKS). Residues 1032–1062 (YKDFQRDKEAAERAIKRDEAKAKKAQQLKRM) adopt a coiled-coil conformation. The span at 1066 to 1083 (IASSTNNKNPLASSSTSV) shows a compositional bias: polar residues. One can recognise a DAD domain in the interval 1083–1158 (VGDGGMVEDI…TPSKSGSRRE (76 aa)). Residues 1117-1142 (DSSSITTISEQSENSNTSSITITTPS) are compositionally biased toward low complexity. The segment covering 1161-1192 (TSKSSDKDKEKEKEKEKQCESTESEDINKKDI) has biased composition (basic and acidic residues).

This sequence belongs to the formin homology family. Diaphanous subfamily. Interacts (via GBD/FH3 domain) with activated Rho-GTPases.

In terms of biological role, formins play an important role in the nucleation of actin and the formation of linear actin filaments. The sequence is that of Formin-F (forF) from Dictyostelium discoideum (Social amoeba).